Reading from the N-terminus, the 467-residue chain is ATP synthase subunit beta (467 aa).

Residue G152–T159 participates in ATP binding.

The protein belongs to the ATPase alpha/beta chains family. As to quaternary structure, F-type ATPases have 2 components, CF(1) - the catalytic core - and CF(0) - the membrane proton channel. CF(1) has five subunits: alpha(3), beta(3), gamma(1), delta(1), epsilon(1). CF(0) has three main subunits: a(1), b(2) and c(9-12). The alpha and beta chains form an alternating ring which encloses part of the gamma chain. CF(1) is attached to CF(0) by a central stalk formed by the gamma and epsilon chains, while a peripheral stalk is formed by the delta and b chains.

It localises to the cell membrane. It carries out the reaction ATP + H2O + 4 H(+)(in) = ADP + phosphate + 5 H(+)(out). In terms of biological role, produces ATP from ADP in the presence of a proton gradient across the membrane. The catalytic sites are hosted primarily by the beta subunits. This chain is ATP synthase subunit beta, found in Caldicellulosiruptor bescii (strain ATCC BAA-1888 / DSM 6725 / KCTC 15123 / Z-1320) (Anaerocellum thermophilum).